Here is a 99-residue protein sequence, read N- to C-terminus: Small ribosomal subunit protein eS24 (99 aa).

Belongs to the eukaryotic ribosomal protein eS24 family.

The chain is Small ribosomal subunit protein eS24 from Methanothrix thermoacetophila (strain DSM 6194 / JCM 14653 / NBRC 101360 / PT) (Methanosaeta thermophila).